The following is a 450-amino-acid chain: tRNA modification GTPase MnmE (450 aa).

Residues Arg-25, Glu-86, and Arg-126 each coordinate (6S)-5-formyl-5,6,7,8-tetrahydrofolate. In terms of domain architecture, TrmE-type G spans 221–373; the sequence is GLRVALVGRP…LVQALLERCG (153 aa). Asn-231 is a binding site for K(+). GTP is bound by residues 231–236, 250–256, 275–278, and 336–339; these read NVGKSS, TELPGTT, DTAG, and NKAD. Mg(2+) is bound at residue Ser-235. The K(+) site is built by Thr-250, Leu-252, and Thr-255. Thr-256 serves as a coordination point for Mg(2+). Lys-450 is a binding site for (6S)-5-formyl-5,6,7,8-tetrahydrofolate.

This sequence belongs to the TRAFAC class TrmE-Era-EngA-EngB-Septin-like GTPase superfamily. TrmE GTPase family. As to quaternary structure, homodimer. Heterotetramer of two MnmE and two MnmG subunits. K(+) is required as a cofactor.

Its subcellular location is the cytoplasm. In terms of biological role, exhibits a very high intrinsic GTPase hydrolysis rate. Involved in the addition of a carboxymethylaminomethyl (cmnm) group at the wobble position (U34) of certain tRNAs, forming tRNA-cmnm(5)s(2)U34. The protein is tRNA modification GTPase MnmE of Parasynechococcus marenigrum (strain WH8102).